The primary structure comprises 642 residues: Threonine--tRNA ligase (642 aa).

The 61-residue stretch at Met1–Thr61 folds into the TGS domain. Residues Asp243–Pro534 are catalytic. Lys286 is subject to N6-acetyllysine. Zn(2+) contacts are provided by Cys334, His385, and His511.

The protein belongs to the class-II aminoacyl-tRNA synthetase family. As to quaternary structure, homodimer. Zn(2+) serves as cofactor.

The protein resides in the cytoplasm. It catalyses the reaction tRNA(Thr) + L-threonine + ATP = L-threonyl-tRNA(Thr) + AMP + diphosphate + H(+). Functionally, catalyzes the attachment of threonine to tRNA(Thr) in a two-step reaction: L-threonine is first activated by ATP to form Thr-AMP and then transferred to the acceptor end of tRNA(Thr). Also edits incorrectly charged L-seryl-tRNA(Thr). The chain is Threonine--tRNA ligase from Shigella flexneri serotype 5b (strain 8401).